The sequence spans 302 residues: Decaprenyl-phosphate phosphoribosyltransferase (302 aa).

Lys28 contacts 5-phospho-alpha-D-ribose 1-diphosphate. Helical transmembrane passes span Val30–Glu50 and Val55–Val75. Residue Tyr70 participates in 5-phospho-alpha-D-ribose 1-diphosphate binding. 2 residues coordinate Mg(2+): Asn73 and Asp77. Lys87 lines the 5-phospho-alpha-D-ribose 1-diphosphate pocket. The next 2 membrane-spanning stretches (helical) occupy residues Trp100 to Leu120 and Pro122 to Leu142. 2 residues coordinate 5-phospho-alpha-D-ribose 1-diphosphate: Lys143 and Arg160. 2 consecutive transmembrane segments (helical) span residues Ala146–Val166 and Ile170–Gly190. Lys191 is a trans,octa-cis-decaprenyl phosphate binding site. 3 helical membrane-spanning segments follow: residues Leu218–Phe238, Ser244–Val264, and Arg282–Gly302.

Belongs to the UbiA prenyltransferase family. DPPR synthase subfamily. As to quaternary structure, homotrimer. It depends on Mg(2+) as a cofactor.

The protein resides in the cell inner membrane. It catalyses the reaction trans,octa-cis-decaprenyl phosphate + 5-phospho-alpha-D-ribose 1-diphosphate + H(+) = trans,octa-cis-decaprenylphospho-beta-D-ribofuranose 5-phosphate + diphosphate. The protein operates within cell wall biogenesis; cell wall polysaccharide biosynthesis. Involved in the biosynthesis of decaprenylphosphoryl arabinose (DPA) a precursor for arabinan synthesis in mycobacterial cell wall biosynthesis. Catalyzes the transfer of a 5-phosphoribosyl residue from phosphoribose diphosphate (PRPP) to decaprenyl phosphate (DP) to form decaprenylphosphoryl-5-phosphoribose (DPPR). In Mycobacterium tuberculosis (strain CDC 1551 / Oshkosh), this protein is Decaprenyl-phosphate phosphoribosyltransferase.